Here is a 394-residue protein sequence, read N- to C-terminus: Na(+)/H(+) antiporter NhaA (394 aa).

Transmembrane regions (helical) follow at residues 14-34 (AGGL…NSAL), 59-79 (LLLW…GLEV), 95-115 (VFPA…YLLF), 125-145 (GWAI…ALLG), 154-174 (VFLL…IALF), 179-199 (VSLQ…YMNW), 213-233 (LVLW…GVIV), 254-274 (GLHP…NAGV), 292-312 (IATG…WLAV), 328-348 (IFAV…IASL), and 363-383 (LGIL…LRLV).

Belongs to the NhaA Na(+)/H(+) (TC 2.A.33) antiporter family.

The protein resides in the cell inner membrane. The catalysed reaction is Na(+)(in) + 2 H(+)(out) = Na(+)(out) + 2 H(+)(in). Na(+)/H(+) antiporter that extrudes sodium in exchange for external protons. This Yersinia pestis bv. Antiqua (strain Angola) protein is Na(+)/H(+) antiporter NhaA.